The sequence spans 667 residues: Polypeptide N-acetylgalactosaminyltransferase 3 (667 aa).

Residues 1–12 lie on the Cytoplasmic side of the membrane; sequence MGLRFQQLKKLW. Residues 13 to 35 traverse the membrane as a helical; Signal-anchor for type II membrane protein segment; the sequence is LLYLFLLFFAFFMFAISINLYVA. At 36 to 667 the chain is on the lumenal side; it reads SIQGGDAEMR…WGFIPLPWRM (632 aa). Asparagine 75 and asparagine 129 each carry an N-linked (GlcNAc...) asparagine glycan. 5 cysteine pairs are disulfide-bonded: cysteine 140/cysteine 375, cysteine 366/cysteine 446, cysteine 526/cysteine 547, cysteine 572/cysteine 601, and cysteine 626/cysteine 649. Residues 149–259 form a catalytic subdomain A region; it reads LPSTSVIIVF…RGWLEPLLSR (111 aa). Residues aspartate 190 and arginine 220 each contribute to the substrate site. The Mn(2+) site is built by aspartate 243 and histidine 245. N-linked (GlcNAc...) asparagine glycans are attached at residues asparagine 279 and asparagine 313. The tract at residues 321–383 is catalytic subdomain B; the sequence is PIATPGMAGG…PCSHVGHVFR (63 aa). Tryptophan 352 contacts substrate. Histidine 380 provides a ligand contact to Mn(2+). Substrate contacts are provided by arginine 383 and tyrosine 388. Asparagine 433 carries N-linked (GlcNAc...) asparagine glycosylation. Positions 513–661 constitute a Ricin B-type lectin domain; it reads EELMALIDLE…KDITQKWGFI (149 aa). Asparagine 590 carries an N-linked (GlcNAc...) asparagine glycan.

Belongs to the glycosyltransferase 2 family. GalNAc-T subfamily. It depends on Mn(2+) as a cofactor. Expressed in developing oocytes and egg chambers. During embryonic stages 9-11, expressed in the primordiums of the foregut, midgut and hindgut. During embryonic stages 12-13, expression is found uniquely in the posterior spiracle. During embryonic stages 14-17, expressed in the pharynx, esophagus and posterior spiracles. Expression observed in the epidermis during embryonic stages 16-17. In third instar larvae, expressed ubiquitously in wing, with increased expression in pleura and notum, eye-antennal, leg and haltere imaginal disks.

It is found in the golgi apparatus membrane. The catalysed reaction is L-seryl-[protein] + UDP-N-acetyl-alpha-D-galactosamine = a 3-O-[N-acetyl-alpha-D-galactosaminyl]-L-seryl-[protein] + UDP + H(+). The enzyme catalyses L-threonyl-[protein] + UDP-N-acetyl-alpha-D-galactosamine = a 3-O-[N-acetyl-alpha-D-galactosaminyl]-L-threonyl-[protein] + UDP + H(+). The protein operates within protein modification; protein glycosylation. Functionally, catalyzes the initial reaction in O-linked oligosaccharide biosynthesis, the transfer of an N-acetyl-D-galactosamine residue to a serine or threonine residue on the protein receptor. It can both act as a peptide transferase that transfers GalNAc onto unmodified peptide substrates, and as a glycopeptide transferase that requires the prior addition of a GalNAc on a peptide before adding additional GalNAc moieties. Prefers EA2 as substrate. Has weak activity toward Muc5AC-3, -13 and -3/13 substrates. Plays a critical role in the regulation of integrin-mediated cell adhesion during wing development by influencing, via glycosylation, the secretion and localization of the integrin ligand Tig to the basal cell layer interface. Might have a role in protein O-glycosylation in the Golgi and thereby in establishing and/or maintaining a proper secretory apparatus structure. Together with Pgant35A, regulates integrin levels and activity-dependent integrin signaling at the synapse in neurons and muscles. The polypeptide is Polypeptide N-acetylgalactosaminyltransferase 3 (Drosophila melanogaster (Fruit fly)).